A 1085-amino-acid polypeptide reads, in one-letter code: MTPAERRAFERQLQQEFPGLELHAWYRQYRSLKAAHPDAILLYRLGDFYETFDDDAKLVADLLEVTLTYKEFASQKGRDQKQRCPMAGIPYHAVEGYVARLVGAGYRVAIAEQITETPSSRTDTRPRSIFAAGIEQTSLTGSNRMVERKVVRVITPGTIIESGMIPAERNNYLAALIADHGRIGLAYADLSTGEFAAVEFSGERAAQQAQGELTRLNAAEILVPDRADLRLPGLEPSSARLEQDLEFLTREERELLLPGERVARRVERENNARWAHGRVTAWPERRWDLRNAHDTLLHQFGVRSLAGFGLEDRPLAIRAAGAIVQYARETQQGVVANLRSIRAYTPGDAMFLDPQTQRNLELLEGASGTTRGSLIGVLDQTRTPMGARLLRRWVSQPLCDLTRLHARHDAVERFVTDAILRASVRETLRRVGDMERVVNRIIQGVGVATPRDMARLRDALRALPELVAALGDWTPPPGEIDLTGVRTLPPSAATDPVSLTENGNERIEPNQTSAVSLRAQREARRRVSARYADEDLFGEEEQNAPPVGSSNHAVGTQPSADDEASPVTAFVDDQATETLALDPCADMLAFLETAIDDEPPALLGASNYLRAGENGEPPRRVIRPGFEPEIDQVVAASRDAQRWISELEPKERERTGIKSLRVDYNRVFGYYIEVPKTYADQVPKHYIRKQTLTTGERYFTDELKRYEEIVEQAQQRLIDLERRAFARICDVVTGAGARLLRTARMIATIDVFAALAEAAVRGRYVRPELYDDTRLRIVGGRHPVVEQTLDETFVPNDIEMDTETRQICLITGPNMSGKSTVLRQVALIALMAQIGSFVPADAAEIGLVDRIFTRIGAQDDIATGRSTFMVEMTETAALLAQSTRRSLIILDEVGRGTSTYDGMAIAQAVIEYIHNEPRLGCRTLFATHYHELTDLERTLPRLKNYHMAATEQDGRVVFLHELRPGGADRSYGIHVAELAGIPQSVIRRASELLAELERRAPRSAPPTVPARGDDRRSAGRASSSGAGAARGEQGRTLPDGQLSLFDLAPGPVIEMLRRIDINQLTPLEALNKLHELQKLARAGGG.

The disordered stretch occupies residues 533–564 (DEDLFGEEEQNAPPVGSSNHAVGTQPSADDEA). Residues 548–559 (GSSNHAVGTQPS) are compositionally biased toward polar residues. 812–819 (GPNMSGKS) contributes to the ATP binding site. The interval 997-1042 (ERRAPRSAPPTVPARGDDRRSAGRASSSGAGAARGEQGRTLPDGQL) is disordered. The span at 1019–1031 (GRASSSGAGAARG) shows a compositional bias: low complexity.

This sequence belongs to the DNA mismatch repair MutS family.

Functionally, this protein is involved in the repair of mismatches in DNA. It is possible that it carries out the mismatch recognition step. This protein has a weak ATPase activity. The protein is DNA mismatch repair protein MutS of Roseiflexus sp. (strain RS-1).